We begin with the raw amino-acid sequence, 576 residues long: uncharacterized protein (576 aa).

It belongs to the chlamydial CPn_0065/CT_288/TC_0561 family.

This is an uncharacterized protein from Chlamydia pneumoniae (Chlamydophila pneumoniae).